A 182-amino-acid chain; its full sequence is UPF0149 protein CGSHiGG_07585 (182 aa).

The protein belongs to the UPF0149 family.

The polypeptide is UPF0149 protein CGSHiGG_07585 (Haemophilus influenzae (strain PittGG)).